Consider the following 291-residue polypeptide: Sulfotransferase 1A1 (291 aa).

44 to 49 (KSGTNW) contributes to the 3'-phosphoadenylyl sulfate binding site. 102–104 (KTH) contributes to the substrate binding site. Histidine 104 functions as the Proton acceptor in the catalytic mechanism. 3'-phosphoadenylyl sulfate-binding positions include arginine 126, serine 134, tyrosine 189, 223–228 (TSFKKM), and 251–255 (FMRKG). Serine 134 is modified (phosphoserine).

Belongs to the sulfotransferase 1 family. As to quaternary structure, homodimer. In terms of tissue distribution, expressed in brain, colon, liver, and small intestine of mice colonized with B.ovatus and L.plantarum.

It is found in the cytoplasm. The enzyme catalyses a phenol + 3'-phosphoadenylyl sulfate = an aryl sulfate + adenosine 3',5'-bisphosphate + H(+). It carries out the reaction 17beta-estradiol + 3'-phosphoadenylyl sulfate = 17beta-estradiol 3-sulfate + adenosine 3',5'-bisphosphate + H(+). The catalysed reaction is 4-ethylphenol + 3'-phosphoadenylyl sulfate = 4-ethylphenyl sulfate + adenosine 3',5'-bisphosphate + H(+). It catalyses the reaction 4-nitrophenol + 3'-phosphoadenylyl sulfate = 4-nitrophenyl sulfate + adenosine 3',5'-bisphosphate. The enzyme catalyses dopamine + 3'-phosphoadenylyl sulfate = dopamine 3-O-sulfate + adenosine 3',5'-bisphosphate + H(+). It carries out the reaction dopamine + 3'-phosphoadenylyl sulfate = dopamine 4-O-sulfate + adenosine 3',5'-bisphosphate + H(+). The catalysed reaction is 3,3',5-triiodo-L-thyronine + 3'-phosphoadenylyl sulfate = 3,3',5-triiodo-L-thyronine sulfate + adenosine 3',5'-bisphosphate + H(+). It catalyses the reaction 3,3',5'-triiodo-L-thyronine + 3'-phosphoadenylyl sulfate = 3,3',5'-triiodo-L-thyronine sulfate + adenosine 3',5'-bisphosphate + H(+). The enzyme catalyses 3,3'-diiodo-L-thyronine + 3'-phosphoadenylyl sulfate = 3,3'-diiodo-L-thyronine sulfate + adenosine 3',5'-bisphosphate + H(+). It carries out the reaction L-thyroxine + 3'-phosphoadenylyl sulfate = L-thyroxine sulfate + adenosine 3',5'-bisphosphate + H(+). In terms of biological role, sulfotransferase that utilizes 3'-phospho-5'-adenylyl sulfate (PAPS) as sulfonate donor to catalyze the sulfate conjugation of a wide variety of acceptor molecules bearing a hydroxyl or an amine group. Sulfonation increases the water solubility of most compounds, and therefore their renal excretion, but it can also result in bioactivation to form active metabolites. Displays broad substrate specificity for small phenolic compounds. Plays an important role in the sulfonation of endogenous molecules such as steroid hormones. Mediates also the metabolic activation of carcinogenic N-hydroxyarylamines leading to highly reactive intermediates capable of forming DNA adducts, potentially resulting in mutagenesis. May play a role in gut microbiota-host metabolic interaction. O-sulfonates 4-ethylphenol (4-EP), a dietary tyrosine-derived metabolite produced by gut bacteria. The product 4-EPS crosses the blood-brain barrier and may negatively regulate oligodendrocyte maturation and myelination, affecting the functional connectivity of different brain regions associated with the limbic system. Catalyzes the sulfate conjugation of dopamine. Catalyzes the sulfation of T4 (L-thyroxine/3,5,3',5'-tetraiodothyronine), T3 (3,5,3'-triiodothyronine), rT3 (3,3',5'-triiodothyronine) and 3,3'-T2 (3,3'-diiodothyronine), with a substrate preference of 3,3'-T2 &gt; rT3 &gt; T3 &gt; T4. The polypeptide is Sulfotransferase 1A1 (Sult1a1) (Mus musculus (Mouse)).